The sequence spans 63 residues: Ferredoxin (63 aa).

A 4Fe-4S ferredoxin-type domain is found at 3 to 31 (WKVSVDVDTCIGDAICASLCPDVFEMGDD). Residues cysteine 12, aspartate 15, and cysteine 18 each contribute to the [4Fe-4S] cluster site. Residues cysteine 22 and cysteine 45 are joined by a disulfide bond. Cysteine 53 is a [4Fe-4S] cluster binding site.

It depends on [4Fe-4S] cluster as a cofactor. [3Fe-4S] cluster serves as cofactor.

Ferredoxins are iron-sulfur proteins that transfer electrons in a wide variety of metabolic reactions. This chain is Ferredoxin (fdxA), found in Thermococcus kodakarensis (strain ATCC BAA-918 / JCM 12380 / KOD1) (Pyrococcus kodakaraensis (strain KOD1)).